The chain runs to 668 residues: Threonine--tRNA ligase (668 aa).

Residues 1-61 (MSDLKIALTH…ADGDQVEPVA (61 aa)) form the TGS domain. Positions 265-564 (DHRKLGRDLD…LVEHYAGAFP (300 aa)) are catalytic. Zn(2+) contacts are provided by Cys358, His409, and His541.

It belongs to the class-II aminoacyl-tRNA synthetase family. Homodimer. The cofactor is Zn(2+).

The protein resides in the cytoplasm. It carries out the reaction tRNA(Thr) + L-threonine + ATP = L-threonyl-tRNA(Thr) + AMP + diphosphate + H(+). Catalyzes the attachment of threonine to tRNA(Thr) in a two-step reaction: L-threonine is first activated by ATP to form Thr-AMP and then transferred to the acceptor end of tRNA(Thr). Also edits incorrectly charged L-seryl-tRNA(Thr). The sequence is that of Threonine--tRNA ligase from Nocardioides sp. (strain ATCC BAA-499 / JS614).